A 251-amino-acid polypeptide reads, in one-letter code: HTH-type transcriptional regulator UlaR (251 aa).

Positions 3–58 (EAQRHQILLDMLAQLGFVTVENVIERLGISPATARRDINKLDESGKLKKVRNGAEA) constitute an HTH deoR-type domain. A DNA-binding region (H-T-H motif) is located at residues 20-39 (VTVENVIERLGISPATARRD).

It localises to the cytoplasm. Its function is as follows. Represses ulaG and the ulaABCDEF operon. In Salmonella arizonae (strain ATCC BAA-731 / CDC346-86 / RSK2980), this protein is HTH-type transcriptional regulator UlaR.